Here is a 169-residue protein sequence, read N- to C-terminus: MEQIIVGVADCRVGHAPEQVLATYALGSCIGLSIYDPKAAIGGMLHYMLPDSTIDPARGRENPYMFADTGIPKLVEQVCGRGANRRRLIAHAAGGASMMDPQAVFDIGKRNYLALRKILWKAGILLAGEAVGGTNSRTVRLEIGSGRLWLQENGKQKELVPSFPQKGGN.

This sequence belongs to the CheD family.

The enzyme catalyses L-glutaminyl-[protein] + H2O = L-glutamyl-[protein] + NH4(+). In terms of biological role, probably deamidates glutamine residues to glutamate on methyl-accepting chemotaxis receptors (MCPs), playing an important role in chemotaxis. In Solibacter usitatus (strain Ellin6076), this protein is Probable chemoreceptor glutamine deamidase CheD.